The chain runs to 442 residues: Cation channel sperm-associated protein 4 (442 aa).

Topologically, residues 1–66 are cytoplasmic; it reads MSEKHKWWQQ…TQMYIKQLLR (66 aa). The helical transmembrane segment at 67–88 threads the bilayer; the sequence is HPAFQLLLAFLLLSNAITIALR. Residues 89 to 98 are Extracellular-facing; sequence TNSYLGQKHY. Residues 99–125 traverse the membrane as a helical segment; sequence ELFSTIDDIVLTILICEVLLGWLNGFW. The Cytoplasmic portion of the chain corresponds to 126 to 129; sequence IFWK. Residues 130-153 traverse the membrane as a helical segment; sequence DGWNILNFAIVFILFMGFFIKQLD. Topologically, residues 154–156 are extracellular; that stretch reads MVA. Residues 157 to 175 traverse the membrane as a helical segment; sequence ITYPLRVLRLVHVCMAVEP. The Cytoplasmic segment spans residues 176–188; it reads LARIIKVILQSMP. Residues 189–212 traverse the membrane as a helical segment; the sequence is DLANVMALILFFMLVFSVFGVTLF. At 213–222 the chain is on the extracellular side; sequence GAFVPKHFQN. An intramembrane region (helical; Pore-forming) is located at residues 223-234; that stretch reads MGVALYTLFICI. Topologically, residues 235-255 are extracellular; that stretch reads TQDGWLDIYTDFQMDEREYAM. The helical transmembrane segment at 256–283 threads the bilayer; sequence EVGGAIYFAVFITLGAFIGLNLFVVVVT. Topologically, residues 284–442 are cytoplasmic; sequence TNLEQMMKTG…NMVNKHKFSH (159 aa).

This sequence belongs to the cation channel sperm-associated (TC 1.A.1.19) family. In terms of assembly, component of the CatSper complex or CatSpermasome composed of the core pore-forming members CATSPER1, CATSPER2, CATSPER3 and CATSPER4 as well as auxiliary members CATSPERB, CATSPERG2, CATSPERD, CATSPERE, CATSPERZ, C2CD6/CATSPERT, SLCO6C1, TMEM249, TMEM262 and EFCAB9. HSPA1 may be an additional auxiliary complex member. The core complex members CATSPER1, CATSPER2, CATSPER3 and CATSPER4 form a heterotetrameric channel. The auxiliary CATSPERB, CATSPERG2, CATSPERD and CATSPERE subunits form a pavilion-like structure over the pore which stabilizes the complex through interactions with CATSPER4, CATSPER3, CATSPER1 and CATSPER2 respectively. SLCO6C1 interacts with CATSPERE and TMEM262/CATSPERH interacts with CATSPERB, further stabilizing the complex. C2CD6/CATSPERT interacts at least with CATSPERD and is required for targeting the CatSper complex in the flagellar membrane. Testis-specific.

It is found in the cell projection. Its subcellular location is the cilium. The protein resides in the flagellum membrane. It catalyses the reaction Ca(2+)(in) = Ca(2+)(out). With respect to regulation, in contrast to the human ortholog, not activated by progesterone. Activated by intracellular alkalinization. Its function is as follows. Pore-forming subunit of the CatSper complex, a sperm-specific voltage-gated calcium channel that plays a central role in sperm cell hyperactivation. Controls calcium entry to mediate the hyperactivated motility, a step needed for sperm motility which is essential late in the preparation of sperm for fertilization. In Mus musculus (Mouse), this protein is Cation channel sperm-associated protein 4 (Catsper4).